Consider the following 2374-residue polypeptide: MEGSNGFSSSLAGLSSSRSSLRLLTHFLSLPTLPVNIYLNARRHSGWYRSPPTLPVNIYLNEQFDNLCLAALRYPGHKLYPSVHTLFPDVSPLKIPHSVPAFAHLVQRQGLRRQGNSITNIYGNGNDVTTDVGANGMSLPIAVGDMPTASTSEAPLGSNKGGSSTSPKSTSNGNVVRGSRYSKWWEPAAARALDRALDHAVDATDAVAGAASKGIKAGAAKLSNKLSGSQTTALLALPGNIAGGAPSATVNANNTSISSQALLPSVNPYPSTPAVSLPNPDAPTQVGPAADRQWLVDTLSWSETIAPLTVFSGPKALTPGVYPPTIEPNTGVYPLPAALCVSHPESVFSTAYNAHAYFNCGFDVTVVVNASQFHGGSLIVLAMAEGLGDITPADSSTWFNFPHTIINLANSNAATLKLPYIGVTPNTSTEGLHNYWTILFAPLTPLAVPTGSPTTVKVSLFVSPIDSAFYGLRFPVPFPAPQHWKTRAVPGAGTYGSVVAGQEIPLVGYAPAAPPRDYLPGRVHNWLEYAARHSWERNLTWTSADEVGDQLVSYPIQPEALANTQTNTAFVLSLFSQWRGSLQISLIFTGPAQCYGRLLLAYTPPSANPPTTIDEANNGTYDVWDVNGDSTYTFTIPFCSQAYWKTVDIGTSSGLVSNNGYFTVFVMNPLVTPGPSPPSATVAAFLHVADDFDVRLPQCPALGFQSGADGAEVQPAPTSDLSDGNPTTDPAPRDNFDYPHHPVDPSTDLAFYFSQYRWFGLNESLTPLDATGGLFYHISLNPINFQQSSLLSVLGAFTYVYANLSLNINVSAPSQPCTFYVFYAPPGASVPSVQTLAELSFFTHTATPLNLAAPTNITVSIPYSSPQSVLCTSFGGFGLQNGGDAGNLHSNTWGTLILYVDLPQSDSVSVSAYISFRDFEAYVPRQTPGVGPVPTSTSIVRVARPTPKPRTARRQGGTLADLILSPESRCFIVAHTTAPFYSILLVNPDEEYAISMFSHGDESILQYSSRSGTRLTPTAPAFFLCAAASVDTVLPYSISQSHLWLTDLTGIPLRAVPPLTLFLSAGAALCAGAQTLIAVAQGGSTPETPPTPNRALLRRQGLGDLPDAAKGLSAALESVARVAGDANIATSSQAIATSINSLSNSIDGATSFMQNFFSGLAPRNPTSPLQHLFAKLIKWVTKIIGSLIIICNNPTPSALIGVSLMLCGDLAEDITEFFSNLGNPLAAVFYRCARALGLSPTPQSAAQAAGGRQGVRDYNDIMSALRNTDWFFEKIMTHIKNLLEWLGVLVKDDPRTKLNGQHEKILELYTDSVTASSTPPSELSADAIRSNLDLAKQLLTLSHAANSVTHIQLCTRAITNYSTALSAISLVGTPGTRPEPLVVYLYGPPGTGKSLLASLLASTLAQALSGDPNNYYSPSSPDCKFYDGYSGQPVHYIDDIGQDPDGADWADFVNIVSSAPFIVPMADVNDKGRFYTSRVVIVTSNFPGPNPRSARCVAALERRLHIRLNVTARDGVAFSAAAALQPSNPPSATRYCKFANPLTQFSMFNLAVDYKSVVLPNTPLTCFDELVDFVLSSLRDRASVNSLLSGMVRTDVTRQGGNADAPAPSAAPLPSVIPSVPSQDPFTRAVNENRPVSFLSKIWSWRAPIFAASSFLSLIAATLTIVRCLRDLRSTQGAYSGTPVPKPRKKDLPKQPVYSGPVRRQGFDPAVMKIMGNVDSFVTLSGTKPIWTMSCLWIGGRNLIAPSHAFVSDEYEITHIRVGSRTLDVSRVTRVDDGELSLLSVPDGPEHKSLIRYIRSASPKSGILASKFSDTPVFVSFWNGKSHSTPLPGVVDEKDSFTYRCSSFQGLCGSPMIATDPGGLGILGIHVAGVAGYNGFSARLTPERVQAFLSHLATPQSVLYFHPPMGPPAHVSRRSRLHPIPPAFGAFPITKEPAALSRKDPRLPEGTDLDAITLAKHDKGDIATPWPCMEEAADWYFSQLPDNLPVLSQEDAIRGLDHMDAIDLSQSPGYPWTTQGRSRRSLFDEDGNPLPELQEAIDSVWDGGSYIYQSFLKDELRPTAKARAGKTRIVEAAPIQAIVVGRRLLGSLINHLQGNPLQHGSAVGCNPDIHWTQIFHSLTSFSNVWSIDYSCFDATIPSVLLSAIASRIAARSDQPGRVLDYLSYTTTSYHVYDSLWYTMIGGNPSGCVGTSILNTIANNIAVISAMMYCNKFDPRDPPVLYCYGDDLIWGSNQDFHPRELQAFYQKFTNFVVTPADKASDFPDSSSIFDITFLKRYFVPDDIHPHLIHPVMDEQTLTNSIMWLRGGEFEEVLRSLETLAFHSGPKNYSAWCEKIKAKIRENGCDATFTPYSVLQRGWVSTCMTGPYPLTG.

Gly115 carries the N-myristoyl glycine; by host lipid modification. 2 disordered regions span residues 144–176 and 707–739; these read GDMPTASTSEAPLGSNKGGSSTSPKSTSNGNVV and GADGAEVQPAPTSDLSDGNPTTDPAPRDNFDYP. Residues 157–174 show a composition bias toward low complexity; the sequence is GSNKGGSSTSPKSTSNGN. The span at 716-728 shows a compositional bias: polar residues; that stretch reads APTSDLSDGNPTT. One can recognise an SF3 helicase domain in the interval 1361–1525; the sequence is YSTALSAISL…VAFSAAAALQ (165 aa). 1387–1394 contributes to the ATP binding site; that stretch reads GPPGTGKS. Gly1600 is lipidated: N-myristoyl glycine; by host. A helical membrane pass occupies residues 1649-1669; the sequence is IFAASSFLSLIAATLTIVRCL. The segment at 1677-1699 is disordered; the sequence is GAYSGTPVPKPRKKDLPKQPVYS. An O-(5'-phospho-RNA)-tyrosine modification is found at Tyr1679. The Peptidase C3 domain maps to 1700 to 1889; it reads GPVRRQGFDP…FSARLTPERV (190 aa). Catalysis depends on for protease 3C activity residues His1748, Glu1779, and Cys1852. In terms of domain architecture, RdRp catalytic spans 2126–2243; it reads SNVWSIDYSC…GSNQDFHPRE (118 aa). Residues Asp2132 and Asp2229 each act as for RdRp activity in the active site.

Interacts with capsid protein VP1. Interacts with capsid protein VP3. In terms of assembly, interacts with capsid protein VP0. Interacts with capsid protein VP3. As to quaternary structure, interacts with capsid protein VP0. Interacts with capsid protein VP1. Homodimer. Interacts with protein 2B. Interacts with protein 2C. In terms of assembly, homodimer. Interacts with host ABCD3. Interacts with protein 2A. Interacts with host ACBD3. As to quaternary structure, homodimer. Interacts with host ABCD3. Interacts with protein 2A. Interacts with protein 3A. Interacts with protein 3C. Interacts with host ACBD3. Homodimer. Interacts with host ABCD3 (via GOLD domain) and PI4KB; these interactions allow the formation of a viral protein/ACBD3/PI4KB complex in order to synthesize PI4P at the viral RNA replication sites. Interacts with protein 2C. Interacts with protein 3C. Protein 3C: Interacts with protein 2A. Protein 3C: Interacts with protein 2C. Specific enzymatic cleavages by the viral protease in vivo yield a variety of precursors and mature proteins. The leader protein-VP0 junction is cleaved by 3C proteinase. The VP1/2A junction is cleaved by the protein 3CD in association with protein 2A. In terms of processing, uridylylated by the polymerase and is covalently linked to the 5'-end of genomic RNA. This uridylylated form acts as a nucleotide-peptide primer for the polymerase.

It is found in the virion. The protein localises to the host cytoplasm. The protein resides in the host cytoplasmic vesicle membrane. It localises to the host Golgi apparatus membrane. The enzyme catalyses Selective cleavage of Gln-|-Gly bond in the poliovirus polyprotein. In other picornavirus reactions Glu may be substituted for Gln, and Ser or Thr for Gly.. The catalysed reaction is RNA(n) + a ribonucleoside 5'-triphosphate = RNA(n+1) + diphosphate. It carries out the reaction ATP + H2O = ADP + phosphate + H(+). Its function is as follows. Required for viral RNA replication and viral RNA encapsidation. Does not have any proteolytic activity. In terms of biological role, forms an icosahedral capsid of pseudo T=3 symmetry with capsid proteins VP0 and VP3. Together they form an icosahedral capsid composed of 60 copies of each VP0, VP1, and VP3. All the three latter proteins contain a beta-sheet structure called beta-barrel jelly roll. Functionally, forms an icosahedral capsid of pseudo T=3 symmetry with capsid proteins VP1 and VP3. Together they form an icosahedral capsid composed of 60 copies of each VP0, VP1, and VP3. All the three latter proteins contain a beta-sheet structure called beta-barrel jelly roll. Forms an icosahedral capsid of pseudo T=3 symmetry with capsid proteins VP0 and VP1. Together they form an icosahedral capsid composed of 60 copies of each VP0, VP1, and VP3. All the three latter proteins contain a beta-sheet structure called beta-barrel jelly roll. Its function is as follows. Required for viral RNA replication. Does not have any proteolytic activity. In terms of biological role, affects membrane integrity and causes an increase in membrane permeability. Functionally, induces and associates with structural rearrangements of intracellular membranes. Displays RNA-binding, nucleotide binding and NTPase activities. May play a role in virion morphogenesis and viral RNA encapsidation by interacting with the capsid protein VP3. Serves as membrane anchor via its hydrophobic domain. Plays an essential role in viral RNA replication by recruiting PI4KB at the viral replication sites, thereby allowing the formation of rearranged membranous structures where viral replication takes place. Its function is as follows. Forms a primer, VPg-pU, which is utilized by the polymerase for the initiation of RNA chains. In terms of biological role, cysteine protease that generates mature viral proteins from the precursor polyprotein. In addition to its proteolytic activity, it binds to viral RNA, and thus influences viral genome replication. RNA and substrate cooperatively bind to the protease. Functionally, replicates the genomic and antigenomic RNAs by recognizing replications specific signals. Performs VPg uridylylation. The sequence is that of Genome polyprotein from Salivirus A (isolate Human/Nigeria/NG-J1/2007) (SV-A).